Reading from the N-terminus, the 277-residue chain is 2-dehydro-3-deoxyphosphooctonate aldolase (277 aa).

It belongs to the KdsA family.

The protein localises to the cytoplasm. It carries out the reaction D-arabinose 5-phosphate + phosphoenolpyruvate + H2O = 3-deoxy-alpha-D-manno-2-octulosonate-8-phosphate + phosphate. It participates in carbohydrate biosynthesis; 3-deoxy-D-manno-octulosonate biosynthesis; 3-deoxy-D-manno-octulosonate from D-ribulose 5-phosphate: step 2/3. It functions in the pathway bacterial outer membrane biogenesis; lipopolysaccharide biosynthesis. The polypeptide is 2-dehydro-3-deoxyphosphooctonate aldolase (Syntrophotalea carbinolica (strain DSM 2380 / NBRC 103641 / GraBd1) (Pelobacter carbinolicus)).